Consider the following 474-residue polypeptide: MTLRLYDSATRAVRDFEPLEPGKVGIYLCGATVQGEPHVGHLRSVIAFDVLVRWLRRSGLDVTMIRNVTDIDDKILAKSAEAGVPWWAWAYRHERAFSDAYDAVGNLPPTYEPRATGHVVEMIELMQRLVDRGNAYRGKDGNVWFDVRSLADYGSLTRQKLENMSTLEEESSDKADPHDFALWKGLKPGDPETASWETPFGRGRPGWHLECSAMAYRYLGETFDIHGGGIDLRFPHHENEQAQSHAAGYGFARYWLHNAWVTAGGEKMSKSLGNYLTAAEALGRVPAVVLRYALASVHYRSSVEFTEATLAEARVTWERIAGFVTRAAELTGPVGDDGAARLADVVLPIAFVEAMDDDLNVSAALAVLHEHIRLGNTALSSGEAGDAAAELSAVRGMLDVLGLDPLAEPWVGEASATPLRGAVDVLVEGVLADRSAARAAKDWARADALRDQLAAAGVVVEDSPSGARWTIKGT.

Residue Cys29 coordinates Zn(2+). The short motif at 31-41 (ATVQGEPHVGH) is the 'HIGH' region element. Zn(2+)-binding residues include Cys211, His236, and Glu240. The short motif at 267–271 (KMSKS) is the 'KMSKS' region element. Lys270 serves as a coordination point for ATP.

Belongs to the class-I aminoacyl-tRNA synthetase family. As to quaternary structure, monomer. Zn(2+) serves as cofactor.

It localises to the cytoplasm. It catalyses the reaction tRNA(Cys) + L-cysteine + ATP = L-cysteinyl-tRNA(Cys) + AMP + diphosphate. The polypeptide is Cysteine--tRNA ligase (Beutenbergia cavernae (strain ATCC BAA-8 / DSM 12333 / CCUG 43141 / JCM 11478 / NBRC 16432 / NCIMB 13614 / HKI 0122)).